Reading from the N-terminus, the 244-residue chain is HTH-type transcriptional regulator RdgA (244 aa).

The 54-residue stretch at 9 to 62 folds into the HTH cro/C1-type domain; it reads LKTARTAQGLSQKALGDMIGVSQAAIQKIEVGKASQTTKIVELSNNLRVRPEWL. The segment at residues 20–39 is a DNA-binding region (H-T-H motif); the sequence is QKALGDMIGVSQAAIQKIEV.

Its function is as follows. Regulates pectin lyase production in response to DNA damage. The protein is HTH-type transcriptional regulator RdgA (rdgA) of Pectobacterium carotovorum subsp. carotovorum (Erwinia carotovora subsp. carotovora).